A 424-amino-acid polypeptide reads, in one-letter code: Kynureninase (424 aa).

Residues Leu-109, Thr-110, 137–140 (FPSD), Asp-222, His-225, and Tyr-247 each bind pyridoxal 5'-phosphate. Lys-248 carries the post-translational modification N6-(pyridoxal phosphate)lysine. Trp-278 and Asn-306 together coordinate pyridoxal 5'-phosphate.

It belongs to the kynureninase family. In terms of assembly, homodimer. The cofactor is pyridoxal 5'-phosphate.

The catalysed reaction is L-kynurenine + H2O = anthranilate + L-alanine + H(+). The enzyme catalyses 3-hydroxy-L-kynurenine + H2O = 3-hydroxyanthranilate + L-alanine + H(+). It participates in amino-acid degradation; L-kynurenine degradation; L-alanine and anthranilate from L-kynurenine: step 1/1. It functions in the pathway cofactor biosynthesis; NAD(+) biosynthesis; quinolinate from L-kynurenine: step 2/3. Its function is as follows. Catalyzes the cleavage of L-kynurenine (L-Kyn) and L-3-hydroxykynurenine (L-3OHKyn) into anthranilic acid (AA) and 3-hydroxyanthranilic acid (3-OHAA), respectively. The protein is Kynureninase of Koribacter versatilis (strain Ellin345).